Here is a 491-residue protein sequence, read N- to C-terminus: bZIP transcription factor hapX (491 aa).

Residues 19–73 (AKPAISPSPGPGTPGSITSKEWVIPPRPKPGRKPATDTPPTKRKAQNRAAQRAFR) are disordered. One can recognise a bZIP domain in the interval 55–95 (DTPPTKRKAQNRAAQRAFRERRAARVNELEEQIKKIEDEHE). The interval 60 to 79 (KRKAQNRAAQRAFRERRAAR) is basic motif. The segment at 83-90 (LEEQIKKI) is leucine-zipper. Over residues 149–161 (SSLSDREAVRSDK) the composition is skewed to basic and acidic residues. Disordered regions lie at residues 149–196 (SSLS…REEV), 224–245 (EQSR…KPDP), and 397–416 (VSRG…SAAP). Over residues 397 to 413 (VSRGRSGSNNNTSSGSS) the composition is skewed to low complexity.

It belongs to the bZIP family. YAP subfamily.

It localises to the nucleus. In terms of biological role, transcription factor required for repression of genes during iron starvation. Represses iron-dependent and mitochondrial-localized activities including respiration, TCA cycle, amino acid metabolism, iron-sulfur-cluster and heme biosynthesis. Iron starvation causes a massive remodeling of the amino acid pool and hapX is essential for the coordination of the production of siderophores and their precursor ornithine. In Aspergillus fumigatus (strain ATCC MYA-4609 / CBS 101355 / FGSC A1100 / Af293) (Neosartorya fumigata), this protein is bZIP transcription factor hapX.